Consider the following 833-residue polypeptide: V-type proton ATPase 116 kDa subunit a 4 (833 aa).

Residues 1–390 lie on the Cytoplasmic side of the membrane; the sequence is MASVFRSEEM…DAYGVGSYRE (390 aa). A helical transmembrane segment spans residues 391–409; sequence INPAPYTIITFPFLFAVMF. At 410-411 the chain is on the vacuolar side; it reads GD. The helical transmembrane segment at 412 to 428 threads the bilayer; sequence CGHGMVMLMAALWMVLN. Over 429–443 the chain is Cytoplasmic; sequence ERHLLAQKSTNEMWN. Residues 444-473 form a helical membrane-spanning segment; the sequence is IFFNGRYLILLMGIFSIYTGLIYNDCFSKS. Over 474 to 538 the chain is Vacuolar; it reads FNIFGSSWSV…ASNKLTFLNS (65 aa). Residues 539–558 traverse the membrane as a helical segment; the sequence is YKMKMSVILGIAHMIFGVIL. Residues 559–576 are Cytoplasmic-facing; it reads SLFNHIYFRRTLNIILQF. The chain crosses the membrane as a helical span at residues 577-597; that stretch reads IPEMIFMLSLFGYLVFMIIFK. At 598-642 the chain is on the vacuolar side; sequence WCRYDAHTSRKAPSILIHFIGMFLFDYDDSSNAPLYGHQQEVQTF. A helical membrane pass occupies residues 643 to 662; that stretch reads FVIIALVSVPWMLLIKPFVL. Over 663-720 the chain is Cytoplasmic; it reads RAKHQKSQLQSFTIHEDAVEGDHSGHSSKKTAGAHGMKDGHEEEFNFGDIFVHQAIHT. Positions 681-700 are disordered; the sequence is VEGDHSGHSSKKTAGAHGMK. Residues 721-745 traverse the membrane as a helical segment; the sequence is IEYCLGCISNTASYLRLWALSLAHA. The Vacuolar portion of the chain corresponds to 746 to 766; that stretch reads ELSEVLWTMVMSIGLRLQGWA. The helical transmembrane segment at 767–805 threads the bilayer; sequence GLVGVFIIFAVFAVLTVAILLVMEGLSAFLHALRLHWVE. Residues 806-833 are Cytoplasmic-facing; it reads FQNKFYEGAGSKFSPFSFKHVLEGTAEE.

This sequence belongs to the V-ATPase 116 kDa subunit family. As to quaternary structure, V-ATPase is a heteromultimeric enzyme made up of two complexes: the ATP-hydrolytic V1 complex and the proton translocation V0 complex. The V1 complex consists of three catalytic AB heterodimers that form a heterohexamer, three peripheral stalks each consisting of EG heterodimers, one central rotor including subunits D and F, and the regulatory subunits C and H. The proton translocation complex V0 consists of the proton transport subunit a, a ring of proteolipid subunits c9c'', rotary subunit d, subunits e and f, and the accessory subunits ATP6AP1/Ac45 and ATP6AP2/PRR. Interacts with the V1 complex V-ATPase subunit A ATP6V1A. Interacts with the V0 complex V-ATPase subunit c ATP6V0C. Specifically expressed in kidney, but not in the heart, brain, spleen, lung, liver, muscle, or testis. Distribution within the kidney appears more widespread than that seen in man. High intensity staining at the surface of intercalated cells, with additional expression in the proximal tubule.

It localises to the apical cell membrane. The protein resides in the basolateral cell membrane. Subunit of the V0 complex of vacuolar(H+)-ATPase (V-ATPase), a multisubunit enzyme composed of a peripheral complex (V1) that hydrolyzes ATP and a membrane integral complex (V0) that translocates protons. V-ATPase is responsible for acidifying and maintaining the pH of intracellular compartments and in some cell types, is targeted to the plasma membrane, where it is responsible for acidifying the extracellular environment. Involved in normal vectorial acid transport into the urine by the kidney. In Mus musculus (Mouse), this protein is V-type proton ATPase 116 kDa subunit a 4 (Atp6v0a4).